A 303-amino-acid chain; its full sequence is Large ribosomal subunit protein uL18 (303 aa).

The protein belongs to the universal ribosomal protein uL18 family. Component of the large ribosomal subunit (LSU).

The protein resides in the cytoplasm. It is found in the nucleus. In terms of biological role, component of the ribosome, a large ribonucleoprotein complex responsible for the synthesis of proteins in the cell. The small ribosomal subunit (SSU) binds messenger RNAs (mRNAs) and translates the encoded message by selecting cognate aminoacyl-transfer RNA (tRNA) molecules. The large subunit (LSU) contains the ribosomal catalytic site termed the peptidyl transferase center (PTC), which catalyzes the formation of peptide bonds, thereby polymerizing the amino acids delivered by tRNAs into a polypeptide chain. The nascent polypeptides leave the ribosome through a tunnel in the LSU and interact with protein factors that function in enzymatic processing, targeting, and the membrane insertion of nascent chains at the exit of the ribosomal tunnel. The sequence is that of Large ribosomal subunit protein uL18 (RPL5) from Oikopleura dioica (Tunicate).